Consider the following 500-residue polypeptide: Lysine--tRNA ligase (500 aa).

Residues E402 and E409 each coordinate Mg(2+).

It belongs to the class-II aminoacyl-tRNA synthetase family. In terms of assembly, homodimer. Requires Mg(2+) as cofactor.

It localises to the cytoplasm. The enzyme catalyses tRNA(Lys) + L-lysine + ATP = L-lysyl-tRNA(Lys) + AMP + diphosphate. In Buchnera aphidicola subsp. Baizongia pistaciae (strain Bp), this protein is Lysine--tRNA ligase.